The sequence spans 78 residues: Probable [Fe-S]-dependent transcriptional repressor (78 aa).

Residues cysteine 56, cysteine 61, cysteine 64, and cysteine 70 each coordinate iron-sulfur cluster.

It belongs to the FeoC family.

May function as a transcriptional regulator that controls feoABC expression. In Salmonella agona (strain SL483), this protein is Probable [Fe-S]-dependent transcriptional repressor.